A 114-amino-acid polypeptide reads, in one-letter code: Protein LLP homolog (114 aa).

Composition is skewed to basic residues over residues 1–21 (MAKS…RKKN) and 91–108 (QRKK…KSKL). Disordered regions lie at residues 1–23 (MAKS…KNAP) and 91–114 (QRKK…GLAW).

This sequence belongs to the learning-associated protein family.

It is found in the nucleus. The protein resides in the nucleolus. The protein localises to the chromosome. Functionally, regulates dendritic and spine growth and synaptic transmission. The protein is Protein LLP homolog (LLPH) of Gallus gallus (Chicken).